The following is an 87-amino-acid chain: UPF0175 protein AF_0597 (87 aa).

It belongs to the UPF0175 family.

In Archaeoglobus fulgidus (strain ATCC 49558 / DSM 4304 / JCM 9628 / NBRC 100126 / VC-16), this protein is UPF0175 protein AF_0597.